We begin with the raw amino-acid sequence, 202 residues long: Complement component C8 gamma chain (202 aa).

Residues Met1–Ala23 form the signal peptide. Cys96 and Cys188 are joined by a disulfide. N-linked (GlcNAc...) asparagine glycosylation occurs at Asn173.

The protein belongs to the calycin superfamily. Lipocalin family. As to quaternary structure, heterotrimer of 3 chains: alpha (C8A), beta (C8B) and gamma (C8G); the alpha and gamma chains are disulfide bonded. Component of the membrane attack complex (MAC), composed of complement C5b, C6, C7, C8A, C8B, C8G and multiple copies of the pore-forming subunit C9.

The protein localises to the secreted. It localises to the target cell membrane. Membrane attack complex (MAC) assembly is inhibited by CD59, thereby protecting self-cells from damage during complement activation. MAC assembly is also inhibited by clusterin (CLU) chaperones that inhibit polymerization of C9. Functionally, component of the membrane attack complex (MAC), a multiprotein complex activated by the complement cascade, which inserts into a target cell membrane and forms a pore, leading to target cell membrane rupture and cell lysis. The MAC is initiated by proteolytic cleavage of C5 into complement C5b in response to the classical, alternative, lectin and GZMK complement pathways. The complement pathways consist in a cascade of proteins that leads to phagocytosis and breakdown of pathogens and signaling that strengthens the adaptive immune system. C8G, together with C8A and C8B, inserts into the target membrane, but does not form pores by itself. During MAC assembly, associates with C5b, C6 and C7 to form the C5b8 intermediate complex that inserts into the target membrane and traverses the bilayer increasing membrane rigidity. This chain is Complement component C8 gamma chain (C8G), found in Oryctolagus cuniculus (Rabbit).